The sequence spans 497 residues: Probable D-lactate dehydrogenase, mitochondrial (497 aa).

The region spanning 65–246 (HRCRPPDVVV…TKATLRLYGV (182 aa)) is the FAD-binding PCMH-type domain.

This sequence belongs to the FAD-binding oxidoreductase/transferase type 4 family. The cofactor is FAD.

It localises to the mitochondrion. The catalysed reaction is (R)-lactate + 2 Fe(III)-[cytochrome c] = 2 Fe(II)-[cytochrome c] + pyruvate + 2 H(+). Its function is as follows. Involved in D-lactate, but not L-lactate catabolic process. This chain is Probable D-lactate dehydrogenase, mitochondrial (ldhd), found in Danio rerio (Zebrafish).